A 98-amino-acid chain; its full sequence is NADH-ubiquinone oxidoreductase chain 4L (98 aa).

3 consecutive transmembrane segments (helical) span residues 1-21 (MTST…GILI), 29-49 (ILLC…VWAI), and 61-81 (LILL…MVAL).

Belongs to the complex I subunit 4L family.

The protein localises to the mitochondrion membrane. The enzyme catalyses a ubiquinone + NADH + 5 H(+)(in) = a ubiquinol + NAD(+) + 4 H(+)(out). Its function is as follows. Core subunit of the mitochondrial membrane respiratory chain NADH dehydrogenase (Complex I) that is believed to belong to the minimal assembly required for catalysis. Complex I functions in the transfer of electrons from NADH to the respiratory chain. The immediate electron acceptor for the enzyme is believed to be ubiquinone. The sequence is that of NADH-ubiquinone oxidoreductase chain 4L (ND4L) from Patiria pectinifera (Starfish).